A 233-amino-acid chain; its full sequence is MADS-box transcription factor 56 (233 aa).

The region spanning 1-61 (MVRGRTELKR…GRLYEFASAP (61 aa)) is the MADS-box domain. Residues 87–177 (IQQVKDDTLG…RGKHRNLEAA (91 aa)) form the K-box domain.

The protein resides in the nucleus. In terms of biological role, probable transcription factor. The sequence is that of MADS-box transcription factor 56 (MADS56) from Oryza sativa subsp. indica (Rice).